We begin with the raw amino-acid sequence, 141 residues long: Ribonuclease VapC16 (141 aa).

Residue Asp99 coordinates Mg(2+). The segment at Asp99–Leu141 is disordered.

Belongs to the PINc/VapC protein family. The cofactor is Mg(2+).

Functionally, toxic component of a type II toxin-antitoxin (TA) system. An RNase. The cognate antitoxin is VapB16. The polypeptide is Ribonuclease VapC16 (Mycobacterium tuberculosis (strain ATCC 25618 / H37Rv)).